A 464-amino-acid chain; its full sequence is Heterogeneous nuclear ribonucleoprotein K (464 aa).

Met-1 bears the N-acetylmethionine mark. Residues 1–37 (METEQPEETFPNTETNGEFGKRPAEDMEEEQAFKRSR) form a disordered region. The interval 1–276 (METEQPEETF…GRGGRPMPPS (276 aa)) is necessary for interaction with DDX1. Basic and acidic residues predominate over residues 19 to 37 (FGKRPAEDMEEEQAFKRSR). Lys-34 carries the N6-acetyllysine; alternate modification. Residue Lys-34 forms a Glycyl lysine isopeptide (Lys-Gly) (interchain with G-Cter in SUMO1); alternate linkage. Lys-34 is covalently cross-linked (Glycyl lysine isopeptide (Lys-Gly) (interchain with G-Cter in SUMO2); alternate). Ser-36 is subject to Phosphoserine. Thr-39 is subject to Phosphothreonine. Residues 42-104 (MVELRILLQS…ETIGEILKKI (63 aa)) form the KH 1 domain. Residues Lys-52 and Lys-60 each participate in a glycyl lysine isopeptide (Lys-Gly) (interchain with G-Cter in SUMO2) cross-link. Tandem repeats lie at residues 54–76 (AGAVIGKGGKNIKALRTDYNASV) and 59–62 (GKGG). The tract at residues 54 to 421 (AGAVIGKGGK…QIRHESGASI (368 aa)) is 2 X 22 AA approximate repeats. The 5 X 4 AA repeats of G-X-G-G stretch occupies residues 59 to 407 (GKGGKNIKAL…LAGSIIGKGG (349 aa)). A phosphoserine mark is found at Ser-75 and Ser-116. One can recognise a KH 2 domain in the interval 144-209 (DCELRLLIHQ…DRVVECIKII (66 aa)). A Glycyl lysine isopeptide (Lys-Gly) (interchain with G-Cter in SUMO1); alternate cross-link involves residue Lys-163. Residue Lys-163 forms a Glycyl lysine isopeptide (Lys-Gly) (interchain with G-Cter in SUMO2); alternate linkage. Lys-198 carries the N6-acetyllysine modification. The tract at residues 209-337 (ILDLISESPI…RPGDRYDGMV (129 aa)) is interaction with ZIK1. Residues Ser-214 and Ser-216 each carry the phosphoserine modification. Lys-219 is covalently cross-linked (Glycyl lysine isopeptide (Lys-Gly) (interchain with G-Cter in SUMO2); alternate). Lys-219 carries the N6-succinyllysine; alternate modification. Positions 236–273 (YGGFTMMFDDRRGRPVGFPMRGRGGFDRMPPGRGGRPM) are RNA-binding RGG-box. 3 consecutive repeat copies span residues 245-250 (DRRGRP), 257-260 (GRGG), and 267-270 (GRGG). The 2 X 6 AA approximate repeats stretch occupies residues 245–329 (DRRGRPVGFP…LMAYDRRGRP (85 aa)). The segment at 250–329 (PVGFPMRGRG…LMAYDRRGRP (80 aa)) is disordered. Positions 252-266 (GFPMRGRGGFDRMPP) are enriched in low complexity. Basic and acidic residues predominate over residues 276 to 285 (SRRDYDDMSP). Ser-284 is modified (phosphoserine). Residues 295–298 (GRGG) form a 3-4 repeat. Omega-N-methylarginine is present on Arg-316. The 2-2 repeat unit spans residues 324–329 (DRRGRP). Omega-N-methylarginine is present on Arg-377. A Phosphoserine modification is found at Ser-379. Residue Tyr-380 is modified to Phosphotyrosine. The 65-residue stretch at 387–451 (IITTQVTIPK…DQIQNAQYLL (65 aa)) folds into the KH 3 domain. 2 consecutive repeat copies span residues 399–421 (AGSIIGKGGQRIKQIRHESGASI) and 404–407 (GKGG). Lys-405 bears the N6-acetyllysine; alternate mark. A Glycyl lysine isopeptide (Lys-Gly) (interchain with G-Cter in SUMO2); alternate cross-link involves residue Lys-405. Phosphoserine is present on Ser-420. Lys-422 participates in a covalent cross-link: Glycyl lysine isopeptide (Lys-Gly) (interchain with G-Cter in SUMO1); alternate. Residue Lys-422 forms a Glycyl lysine isopeptide (Lys-Gly) (interchain with G-Cter in SUMO2); alternate linkage. A Glycyl lysine isopeptide (Lys-Gly) (interchain with G-Cter in SUMO); alternate cross-link involves residue Lys-422.

As to quaternary structure, identified in the spliceosome C complex. Interacts with ANKRD28, RBM42 and ZIK1. Interacts with DDX1. Interacts with MDM2; this interaction leads to ubiquitination and proteasomal degradation. Interacts with p53/TP53. Interacts with BRDT. Interacts with IVNS1ABP. Interacts with PPIA/CYPA. Part of a transcription inhibitory ribonucleoprotein complex composed at least of the circular RNA circZNF827, ZNF827 and HNRNPL. In terms of processing, sumoylated by CBX4. Sumoylation is increased upon DNA damage, such as that produced by doxorubicin, etoposide, UV light and camptothecin, due to enhanced CBX4 phosphorylation by HIPK2 under these conditions. Post-translationally, ubiquitinated by MDM2. Doxorubicin treatment does not affect monoubiquitination, but slightly decreases HNRNPK poly-ubiquitination. O-glycosylated (O-GlcNAcylated), in a cell cycle-dependent manner.

The protein resides in the cytoplasm. It localises to the nucleus. Its subcellular location is the nucleoplasm. It is found in the cell projection. The protein localises to the podosome. One of the major pre-mRNA-binding proteins. Binds tenaciously to poly(C) sequences. Likely to play a role in the nuclear metabolism of hnRNAs, particularly for pre-mRNAs that contain cytidine-rich sequences. Can also bind poly(C) single-stranded DNA. Plays an important role in p53/TP53 response to DNA damage, acting at the level of both transcription activation and repression. When sumoylated, acts as a transcriptional coactivator of p53/TP53, playing a role in p21/CDKN1A and 14-3-3 sigma/SFN induction. As far as transcription repression is concerned, acts by interacting with long intergenic RNA p21 (lincRNA-p21), a non-coding RNA induced by p53/TP53. This interaction is necessary for the induction of apoptosis, but not cell cycle arrest. As part of a ribonucleoprotein complex composed at least of ZNF827, HNRNPL and the circular RNA circZNF827 that nucleates the complex on chromatin, may negatively regulate the transcription of genes involved in neuronal differentiation. This Bos taurus (Bovine) protein is Heterogeneous nuclear ribonucleoprotein K (HNRNPK).